Consider the following 187-residue polypeptide: UPF0669 protein C6orf120 homolog (187 aa).

The signal sequence occupies residues 1-23 (MVEYWKRNFFMVLVLQAFYLANC). An N-linked (GlcNAc...) asparagine glycan is attached at Asn-47.

The protein belongs to the UPF0669 family.

The protein resides in the secreted. The polypeptide is UPF0669 protein C6orf120 homolog (Xenopus tropicalis (Western clawed frog)).